Here is a 185-residue protein sequence, read N- to C-terminus: ATP synthase subunit b (185 aa).

The helical transmembrane segment at G27–G47 threads the bilayer.

Belongs to the ATPase B chain family. F-type ATPases have 2 components, F(1) - the catalytic core - and F(0) - the membrane proton channel. F(1) has five subunits: alpha(3), beta(3), gamma(1), delta(1), epsilon(1). F(0) has three main subunits: a(1), b(2) and c(10-14). The alpha and beta chains form an alternating ring which encloses part of the gamma chain. F(1) is attached to F(0) by a central stalk formed by the gamma and epsilon chains, while a peripheral stalk is formed by the delta and b chains.

It localises to the cell inner membrane. Its function is as follows. F(1)F(0) ATP synthase produces ATP from ADP in the presence of a proton or sodium gradient. F-type ATPases consist of two structural domains, F(1) containing the extramembraneous catalytic core and F(0) containing the membrane proton channel, linked together by a central stalk and a peripheral stalk. During catalysis, ATP synthesis in the catalytic domain of F(1) is coupled via a rotary mechanism of the central stalk subunits to proton translocation. Component of the F(0) channel, it forms part of the peripheral stalk, linking F(1) to F(0). The protein is ATP synthase subunit b of Aquifex aeolicus (strain VF5).